Reading from the N-terminus, the 1012-residue chain is Alanine--tRNA ligase, mitochondrial (1012 aa).

The transit peptide at 1–24 (MYNSAKQLQRVLTAREIRKTFLDH) directs the protein to the mitochondrion. Residues His-656, His-660, Cys-766, and His-770 each coordinate Zn(2+).

This sequence belongs to the class-II aminoacyl-tRNA synthetase family. As to quaternary structure, monomer. It depends on Zn(2+) as a cofactor.

The protein localises to the mitochondrion. It carries out the reaction tRNA(Ala) + L-alanine + ATP = L-alanyl-tRNA(Ala) + AMP + diphosphate. Functionally, catalyzes the attachment of alanine to tRNA(Ala) in a two-step reaction: alanine is first activated by ATP to form Ala-AMP and then transferred to the acceptor end of tRNA(Ala). Also edits incorrectly charged tRNA(Ala) via its editing domain. The protein is Alanine--tRNA ligase, mitochondrial of Drosophila melanogaster (Fruit fly).